A 268-amino-acid chain; its full sequence is MQSGTVDGLYHEVHGGPASDRQTVILSAGLGGSGTFWAPQMQALMSRFRVVLYDHRGTGRSARTLTDPHTVAAMGDDIVKLMDALGLERAHVVGHAAGGNAGLALALNHPDRLDKLVVVNGWSRPDPHIKRCFDTRLALLNDTGIAAYVHAQPLFLYPADWLSANNARLEAEEVHHINGFPSPDVMRTRIQALLEFDIDEDLETIRCPVLVSASADDMLVPLSCSRRLAERLPNATLDIAPWGGHGFTVTAPEAFNAAVLNFLSGEAA.

One can recognise an AB hydrolase-1 domain in the interval 24–243; the sequence is VILSAGLGGS…NATLDIAPWG (220 aa).

It belongs to the AB hydrolase superfamily. Hydrolase RutD family.

It catalyses the reaction carbamate + 2 H(+) = NH4(+) + CO2. Functionally, involved in pyrimidine catabolism. May facilitate the hydrolysis of carbamate, a reaction that can also occur spontaneously. This chain is Putative carbamate hydrolase RutD, found in Caulobacter sp. (strain K31).